The sequence spans 260 residues: Snake venom serine protease homolog KN7 (260 aa).

The N-terminal stretch at 1–18 (MVLIRVLANLLILQLSYA) is a signal peptide. Positions 19 to 24 (QKSSEL) are excised as a propeptide. Residues 25-251 (IIGGDECNIN…HLDWIKSIIA (227 aa)) form the Peptidase S1 domain. Disulfide bonds link C31–C165, C52–C68, C100–C258, C144–C212, C176–C191, and C202–C227. 3 N-linked (GlcNAc...) asparagine glycosylation sites follow: N83, N123, and N124.

This sequence belongs to the peptidase S1 family. Snake venom subfamily. In terms of tissue distribution, expressed by the venom gland.

The protein localises to the secreted. In terms of biological role, snake venom serine protease homolog that may act in the hemostasis system of the prey. The polypeptide is Snake venom serine protease homolog KN7 (Trimeresurus stejnegeri (Chinese green tree viper)).